We begin with the raw amino-acid sequence, 94 residues long: Protein S100-A1 (94 aa).

EF-hand domains follow at residues 13 to 48 and 50 to 85; these read INVF…FLDA and KDVD…LTVA. Residues Lys28, Glu33, Asp63, Asn65, Asp67, Glu69, and Glu74 each contribute to the Ca(2+) site. Cys86 carries the post-translational modification S-nitrosocysteine.

This sequence belongs to the S-100 family. In terms of assembly, dimer of either two alpha chains, or two beta chains, or one alpha and one beta chain. Also forms heterodimers with S100P. Interacts with AGER. Interacts with CAPZA1. Interacts with FKBP4. Interacts with RYR1 and RYR2. Interacts with CACYBP in a calcium-dependent manner. Interacts with PPP5C (via TPR repeats); the interaction is calcium-dependent and modulates PPP5C activity. Interacts with ATP2A2 and PLN in a Ca(2+)-dependent manner. Interacts with mitochondrial F1-ATPase subunits ATP5F1A and ATP5F1B; these interactions increase F1-ATPase activity. Post-translationally, glutathionylated; glutathionylation increases affinity to calcium about 10-fold. Highly prevalent in heart. Also found in lesser quantities in skeletal muscle and brain.

Its subcellular location is the cytoplasm. It localises to the sarcoplasmic reticulum. The protein resides in the mitochondrion. Functionally, small calcium binding protein that plays important roles in several biological processes such as Ca(2+) homeostasis, chondrocyte biology and cardiomyocyte regulation. In response to an increase in intracellular Ca(2+) levels, binds calcium which triggers conformational changes. These changes allow interactions with specific target proteins and modulate their activity. Regulates a network in cardiomyocytes controlling sarcoplasmic reticulum Ca(2+) cycling and mitochondrial function through interaction with the ryanodine receptors RYR1 and RYR2, sarcoplasmic reticulum Ca(2+)-ATPase/ATP2A2 and mitochondrial F1-ATPase. Facilitates diastolic Ca(2+) dissociation and myofilament mechanics in order to improve relaxation during diastole. In Homo sapiens (Human), this protein is Protein S100-A1 (S100A1).